A 175-amino-acid chain; its full sequence is MGSEPTKVMVAVNASTIKDYPNPSISCKRAFEWTLEKIVRSNTSDFKILLLHVQVVDEDGFDDVDSIYASPEDFRDMRQSNKAKGLHLLEFFVNKCHEIGVGCEAWIKTGDPKDVICQEVKRVRPDFLVVGSRGLGRFQKVFVGTVSAFCVKHAECPVMTIKRNADETPSDPADD.

The AMP site is built by Ala11, Val12, Asn13, Ser26, Cys27, Val53, Gly131, Arg133, Thr145, Val146, and Ser147.

It belongs to the universal stress protein A family. In terms of assembly, homohexamer.

This chain is Universal stress protein A-like protein, found in Arabidopsis thaliana (Mouse-ear cress).